Here is a 148-residue protein sequence, read N- to C-terminus: Large ribosomal subunit protein bL9 (148 aa).

Belongs to the bacterial ribosomal protein bL9 family.

Functionally, binds to the 23S rRNA. The chain is Large ribosomal subunit protein bL9 from Alkaliphilus oremlandii (strain OhILAs) (Clostridium oremlandii (strain OhILAs)).